The sequence spans 475 residues: Ankyrin repeat, SAM and basic leucine zipper domain-containing protein 1 (475 aa).

3 positions are modified to phosphoserine: Ser-17, Ser-18, and Ser-20. ANK repeat units lie at residues 45–74, 78–107, 110–144, 148–177, 181–210, and 214–243; these read EKNE…SVES, YGWT…NASF, DKQT…DPNV, RLMT…EVNS, NGYT…NKML, and DGKT…PLEG. Residues 272-334 enclose the SAM domain; that stretch reads SYTAFGDLEI…KILAALKELE (63 aa).

In terms of assembly, interacts with DDX4, PIWIL1, RANBP9 and TDRD1.

The protein localises to the cytoplasm. Functionally, plays a central role during spermatogenesis by repressing transposable elements and preventing their mobilization, which is essential for the germline integrity. Acts via the piRNA metabolic process, which mediates the repression of transposable elements during meiosis by forming complexes composed of piRNAs and Piwi proteins and governs the methylation and subsequent repression of transposons. Its association with pi-bodies suggests a participation in the primary piRNAs metabolic process. Required prior to the pachytene stage to facilitate the production of multiple types of piRNAs, including those associated with repeats involved in the regulation of retrotransposons. May act by mediating protein-protein interactions during germ cell maturation. In Mustela putorius furo (European domestic ferret), this protein is Ankyrin repeat, SAM and basic leucine zipper domain-containing protein 1 (ASZ1).